We begin with the raw amino-acid sequence, 360 residues long: Phospho-N-acetylmuramoyl-pentapeptide-transferase (360 aa).

The next 10 membrane-spanning stretches (helical) occupy residues Ala26–Arg46, Gly70–Trp90, Phe97–Tyr117, Phe134–Ala154, Val168–Ser188, Gly199–Ser219, Val236–Phe256, Val263–Val283, Ile288–Val308, and Val338–Lys358.

Belongs to the glycosyltransferase 4 family. MraY subfamily. It depends on Mg(2+) as a cofactor.

It localises to the cell inner membrane. It carries out the reaction UDP-N-acetyl-alpha-D-muramoyl-L-alanyl-gamma-D-glutamyl-meso-2,6-diaminopimeloyl-D-alanyl-D-alanine + di-trans,octa-cis-undecaprenyl phosphate = di-trans,octa-cis-undecaprenyl diphospho-N-acetyl-alpha-D-muramoyl-L-alanyl-D-glutamyl-meso-2,6-diaminopimeloyl-D-alanyl-D-alanine + UMP. Its pathway is cell wall biogenesis; peptidoglycan biosynthesis. Catalyzes the initial step of the lipid cycle reactions in the biosynthesis of the cell wall peptidoglycan: transfers peptidoglycan precursor phospho-MurNAc-pentapeptide from UDP-MurNAc-pentapeptide onto the lipid carrier undecaprenyl phosphate, yielding undecaprenyl-pyrophosphoryl-MurNAc-pentapeptide, known as lipid I. In Thioalkalivibrio sulfidiphilus (strain HL-EbGR7), this protein is Phospho-N-acetylmuramoyl-pentapeptide-transferase.